We begin with the raw amino-acid sequence, 309 residues long: Clotting factor G beta subunit (309 aa).

Residues 1-31 (MDISFLVFITLSMALFSSNVTGTSVTSRVRR) form the signal peptide. 4 disulfide bridges follow: Cys-38/Cys-158, Cys-74/Cys-90, Cys-205/Cys-227, and Cys-238/Cys-268. The Peptidase S1 domain occupies 47–292 (IIGGGIATPH…YVNWLQEITF (246 aa)). The Charge relay system role is filled by His-89. N-linked (GlcNAc...) asparagine glycosylation occurs at Asn-100. The Charge relay system role is filled by Asp-138. Residue Asn-206 is glycosylated (N-linked (GlcNAc...) asparagine). Residue Ser-242 is the Charge relay system of the active site.

Belongs to the peptidase S1 family. In terms of assembly, clotting factor G is a heterodimer composed of two non-covalently associated subunits, alpha and beta. Upon activation, converted to a two-chain active form linked by a disulfide bond. Forms a covalent heterodimer with intracellular coagulation inhibitor 3/LICI-3. In terms of tissue distribution, expressed in the hemocytes (at protein level).

It catalyses the reaction Selective cleavage of 98-Arg-|-Ile-99 bond in Limulus proclotting enzyme to form active clotting enzyme.. Its activity is regulated as follows. Binding to (1-&gt;3)-beta-D-glucan to alpha subunit, induces autocatalysis and activation of beta subunit. Inhibited by intracellular coagulation inhibitor 3/LICI-3 and to a lesser extend by intracellular coagulation inhibitor 2/LICI-2. In terms of biological role, component of the heterodimer clotting factor G which may play a role in defense mechanisms against fungi. Initiates a (1-&gt;3)-beta-glucan-sensing clotting pathway whereby the alpha subunit binds to glucans containing (1-&gt;3)-beta linkages, which are components of the fungal cell wall, and the beta subunit catalyzes the activation of proclotting enzyme. This chain is Clotting factor G beta subunit, found in Tachypleus tridentatus (Japanese horseshoe crab).